Reading from the N-terminus, the 68-residue chain is MARITIEDCLKRVPNRFLLVHMAAKRVRQMREGSEYLVSSPKNEDIVVALREIAADKVYVSDNMPDEL.

Belongs to the RNA polymerase subunit omega family. The RNAP catalytic core consists of 2 alpha, 1 beta, 1 beta' and 1 omega subunit. When a sigma factor is associated with the core the holoenzyme is formed, which can initiate transcription.

The enzyme catalyses RNA(n) + a ribonucleoside 5'-triphosphate = RNA(n+1) + diphosphate. Functionally, promotes RNA polymerase assembly. Latches the N- and C-terminal regions of the beta' subunit thereby facilitating its interaction with the beta and alpha subunits. This chain is DNA-directed RNA polymerase subunit omega, found in Desulfatibacillum aliphaticivorans.